Consider the following 630-residue polypeptide: Zinc finger CW-type PWWP domain protein 1 (630 aa).

Disordered regions lie at residues 1 to 99 and 130 to 184; these read MMAA…TSAE and LDEE…TEPS. Composition is skewed to basic and acidic residues over residues 26 to 40, 59 to 81, and 141 to 152; these read LHSE…KEDA, LKKE…KLKA, and TDKKDADPEKVI. The CW-type zinc finger occupies 241–295; it reads FGHCVIWVQCSSPKCEKWRQLRGNIDPSVLPDDWSCDQNPDPNYNRCDIPEESWA. Positions 250, 255, 276, and 287 each coordinate Zn(2+). Residues 308–374 form the PWWP domain; that stretch reads PGSIIWAKQY…VRMLKNFQEL (67 aa). The tract at residues 430–595 is disordered; sequence DLTLCESNNP…FPPDDDCSSD (166 aa). A coiled-coil region spans residues 435 to 465; the sequence is ESNNPESCLEKEEKDLEEEKEEEEEKKDPTL. The span at 449-459 shows a compositional bias: acidic residues; that stretch reads DLEEEKEEEEE. The span at 514-527 shows a compositional bias: basic and acidic residues; that stretch reads GKEEQGNSDLDHPV. The residue at position 619 (serine 619) is a Phosphoserine.

In terms of tissue distribution, testis (at protein level). Expressed in thymus, brain, lung, ovary, oviduct and uterus.

The protein resides in the nucleus. It localises to the chromosome. In terms of biological role, dual histone methylation reader specific for PRDM9-catalyzed histone marks (H3K4me3 and H3K36me3) that facilitates the repair of PRDM9-induced meiotic double-strand breaks (DSBs). Essential for male fertility and spermatogenesis. Required for meiosis prophase I progression in male but not in female germ cells. This is Zinc finger CW-type PWWP domain protein 1 (Zcwpw1) from Mus musculus (Mouse).